The sequence spans 503 residues: Maturase K (503 aa).

It belongs to the intron maturase 2 family. MatK subfamily.

Its subcellular location is the plastid. The protein localises to the chloroplast. In terms of biological role, usually encoded in the trnK tRNA gene intron. Probably assists in splicing its own and other chloroplast group II introns. This is Maturase K from Panax quinquefolius (American ginseng).